We begin with the raw amino-acid sequence, 478 residues long: UDP-N-acetylmuramate--L-alanine ligase (478 aa).

An ATP-binding site is contributed by 130 to 136 (GTHGKTT).

The protein belongs to the MurCDEF family.

Its subcellular location is the cytoplasm. The catalysed reaction is UDP-N-acetyl-alpha-D-muramate + L-alanine + ATP = UDP-N-acetyl-alpha-D-muramoyl-L-alanine + ADP + phosphate + H(+). It participates in cell wall biogenesis; peptidoglycan biosynthesis. In terms of biological role, cell wall formation. The sequence is that of UDP-N-acetylmuramate--L-alanine ligase from Microcystis aeruginosa (strain NIES-843 / IAM M-2473).